The following is a 535-amino-acid chain: Alkaline phosphatase, placental type (535 aa).

A signal peptide spans 1–22 (MLGPCMLLLLLLLGLRLQLSLG). Mg(2+) is bound at residue aspartate 64. Zn(2+)-binding residues include aspartate 64 and serine 114. The active-site Phosphoserine intermediate is the serine 114. An intrachain disulfide couples cysteine 143 to cysteine 205. N-linked (GlcNAc...) asparagine glycosylation is present at asparagine 144. Serine 177 contacts Mg(2+). Glutamate 238 is a binding site for Ca(2+). N-linked (GlcNAc...) asparagine glycosylation is present at asparagine 271. Residues phenylalanine 291, glutamate 292, and aspartate 307 each coordinate Ca(2+). Glutamate 333 lines the Mg(2+) pocket. Residues aspartate 338, histidine 342, aspartate 379, and histidine 380 each contribute to the Zn(2+) site. Residues 425-449 (DGARPDVTESESGSPEYRQQSAVPL) form a disordered region. Polar residues predominate over residues 434-446 (SESGSPEYRQQSA). Histidine 454 lines the Zn(2+) pocket. Cysteine 489 and cysteine 496 are disulfide-bonded. Aspartate 506 carries GPI-anchor amidated aspartate lipidation. The propeptide at 507 to 535 (AAHPGRSVVPALLPLLAGTLLLLETATAP) is removed in mature form. Residues 513 to 529 (SVVPALLPLLAGTLLLL) traverse the membrane as a helical segment.

The protein belongs to the alkaline phosphatase family. Homodimer. Requires Mg(2+) as cofactor. Zn(2+) serves as cofactor. The cofactor is Ca(2+). As to expression, detected in placenta (at protein level).

It is found in the cell membrane. The enzyme catalyses a phosphate monoester + H2O = an alcohol + phosphate. Alkaline phosphatase that can hydrolyze various phosphate compounds. The sequence is that of Alkaline phosphatase, placental type from Homo sapiens (Human).